An 858-amino-acid polypeptide reads, in one-letter code: Taste receptor type 1 member 3 (858 aa).

The N-terminal stretch at 1–20 (MPGLAILGLSLAAFLELGMG) is a signal peptide. The Extracellular portion of the chain corresponds to 21–575 (SSLCLSQQFK…FLAWGEPAVL (555 aa)). Asparagine 85, asparagine 130, asparagine 203, asparagine 264, asparagine 379, asparagine 387, asparagine 418, asparagine 439, and asparagine 482 each carry an N-linked (GlcNAc...) asparagine glycan. Residues 576–596 (SLLLLLCLVLGLTLAALGLFV) traverse the membrane as a helical segment. Topologically, residues 597–610 (HYWDSPLVQASGGS) are cytoplasmic. The chain crosses the membrane as a helical span at residues 611 to 631 (LFCFGLICLGLFCLSVLLFPG). The Extracellular portion of the chain corresponds to 632–644 (RPRSASCLAQQPM). The chain crosses the membrane as a helical span at residues 645-665 (AHLPLTGCLSTLFLQAAEIFV). The Cytoplasmic portion of the chain corresponds to 666-687 (ESELPLSWANWLCSYLRGPWAW). A helical membrane pass occupies residues 688–708 (LVVLLATLVEAALCAWYLMAF). The Extracellular portion of the chain corresponds to 709-735 (PPEVVTDWQVLPTEVLEHCRMRSWVSL). A helical membrane pass occupies residues 736–756 (GLVHITNAVLAFLCFLGTFLV). Residues 757-767 (QSQPGRYNRAR) are Cytoplasmic-facing. The chain crosses the membrane as a helical span at residues 768–788 (GLTFAMLAYFIIWVSFVPLLA). Residues 789–796 (NVQVAYQP) lie on the Extracellular side of the membrane. A helical transmembrane segment spans residues 797–817 (AVQMGAILFCALGILATFHLP). Residues 818–858 (KCYVLLWLPELNTQEFFLGRSPKEASDGNSGSSEATRGHSE) lie on the Cytoplasmic side of the membrane. The segment at 839–858 (PKEASDGNSGSSEATRGHSE) is disordered.

Belongs to the G-protein coupled receptor 3 family. TAS1R subfamily. As to quaternary structure, forms homodimers or heterodimers with TAS1R1 and TAS1R2.

It is found in the cell membrane. In terms of biological role, putative taste receptor. TAS1R1/TAS1R3 responds to the umami taste stimulus (the taste of monosodium glutamate) and also to most of the 20 standard L-amino acids, but not to their D-enantiomers or other compounds. TAS1R2/TAS1R3 recognizes diverse natural and synthetic sweeteners. TAS1R3 is essential for the recognition and response to the disaccharide trehalose. Sequence differences within and between species can significantly influence the selectivity and specificity of taste responses. This Rattus norvegicus (Rat) protein is Taste receptor type 1 member 3 (Tas1r3).